A 29-amino-acid polypeptide reads, in one-letter code: Cyclotide vibi-C (29 aa).

Residues 1 to 29 (GLPVCGETCAFGSCYTPGCSCSWPVCTRN) constitute a cross-link (cyclopeptide (Gly-Asn)). Disulfide bonds link Cys5–Cys19, Cys9–Cys21, and Cys14–Cys26.

This is a cyclic peptide.

Its function is as follows. Probably participates in a plant defense mechanism. The sequence is that of Cyclotide vibi-C from Viola biflora (Yellow wood violet).